A 352-amino-acid chain; its full sequence is MSVPDRKRALEAAIAYIEKQFGAGSIMSLGKHSSAHEISTIKTGALSLDLALGIGGVPKGRIVEIFGPESSGKTTLATHIVANAQKMGGVAAYIDAEHALDPNYAALIGANINDLMISQPDCGEDALSIAELLARSGAVDVIVIDSVAALVPKSELEGEIGDVHVGLQARMMSQALRKLTATLARTNTCAIFINQIREKIGVSFGNPETTTGGRALKFYSSIRIDIRRIGSIKGGENFDIGNRIKVKVAKNKLAPPFRTAEFDILFNEGISSAGCIIDLAVEKNIIDKKGSWFNYQDRKLGQGREAVREELKRNKELFHELERCIYESVQASQVPAAACVDAESRQVAEAAK.

67–74 (GPESSGKT) contributes to the ATP binding site.

It belongs to the RecA family.

It is found in the cytoplasm. Functionally, can catalyze the hydrolysis of ATP in the presence of single-stranded DNA, the ATP-dependent uptake of single-stranded DNA by duplex DNA, and the ATP-dependent hybridization of homologous single-stranded DNAs. It interacts with LexA causing its activation and leading to its autocatalytic cleavage. The polypeptide is Protein RecA (Chlamydia trachomatis serovar A (strain ATCC VR-571B / DSM 19440 / HAR-13)).